Here is a 369-residue protein sequence, read N- to C-terminus: 3-isopropylmalate dehydrogenase (369 aa).

Residue 76-89 (GPKWDRNPSHLRPE) participates in NAD(+) binding. 4 residues coordinate substrate: R96, R106, R134, and D223. 3 residues coordinate Mg(2+): D223, D247, and D251. Residue 281–293 (GSAPDIAGQNKAN) participates in NAD(+) binding.

The protein belongs to the isocitrate and isopropylmalate dehydrogenases family. LeuB type 1 subfamily. In terms of assembly, homodimer. It depends on Mg(2+) as a cofactor. Mn(2+) serves as cofactor.

Its subcellular location is the cytoplasm. The catalysed reaction is (2R,3S)-3-isopropylmalate + NAD(+) = 4-methyl-2-oxopentanoate + CO2 + NADH. The protein operates within amino-acid biosynthesis; L-leucine biosynthesis; L-leucine from 3-methyl-2-oxobutanoate: step 3/4. In terms of biological role, catalyzes the oxidation of 3-carboxy-2-hydroxy-4-methylpentanoate (3-isopropylmalate) to 3-carboxy-4-methyl-2-oxopentanoate. The product decarboxylates to 4-methyl-2 oxopentanoate. The sequence is that of 3-isopropylmalate dehydrogenase (leuB) from Priestia megaterium (strain DSM 319 / IMG 1521) (Bacillus megaterium).